The primary structure comprises 645 residues: Bifurcating [FeFe] hydrogenase alpha subunit (645 aa).

Residues 1 to 76 enclose the 2Fe-2S ferredoxin-type domain; sequence MKIYVDGREV…GMKVKTNTPE (76 aa). Residues cysteine 34, cysteine 45, cysteine 48, and cysteine 60 each coordinate [2Fe-2S] cluster. Residues 76–115 enclose the 4Fe-4S His(Cys)3-ligated-type domain; sequence EIYEMRRNILELILATHNRDCTTCDRNGSCKLQKYAEDFG. The [4Fe-4S] cluster site is built by histidine 92, cysteine 96, cysteine 99, cysteine 105, cysteine 143, cysteine 146, cysteine 149, cysteine 153, cysteine 186, cysteine 189, cysteine 192, cysteine 196, cysteine 295, cysteine 350, cysteine 482, and cysteine 486. 4Fe-4S ferredoxin-type domains are found at residues 133 to 164 and 178 to 206; these read SAPV…VIEF and DTPL…IRND. Fe(2+) is bound at residue cysteine 486. Residues cysteine 575, cysteine 580, cysteine 612, and cysteine 616 each contribute to the [2Fe-2S] cluster site.

Heterotrimer composed of HydA (alpha subunit), HydB (beta subunit) and HydC (gamma subunit). Near neutral and acidic pH conditions favor oligomerization of the heterotrimeric holoenzyme. Requires [2Fe-2S] cluster as cofactor. [4Fe-4S] cluster serves as cofactor. The cofactor is Fe(2+).

It is found in the cytoplasm. It catalyses the reaction 2 H2 + 2 oxidized [2Fe-2S]-[ferredoxin] + NAD(+) = 2 reduced [2Fe-2S]-[ferredoxin] + NADH + 3 H(+). In terms of biological role, catalyzes the oxidation of the physiological electron carriers NADH and reduced ferredoxin, coupled to the production of H(2). Acts as a bifurcating [FeFe] hydrogenase, which uses the exergonic oxidation of reduced ferredoxin to drive the unfavorable oxidation of NADH to produce H(2). The alpha subunit contains the catalytic H-cluster. This chain is Bifurcating [FeFe] hydrogenase alpha subunit, found in Thermotoga maritima (strain ATCC 43589 / DSM 3109 / JCM 10099 / NBRC 100826 / MSB8).